Here is a 295-residue protein sequence, read N- to C-terminus: Aquaporin NIP2-1 (295 aa).

The next 2 helical transmembrane spans lie at Val-49–Ile-69 and Ser-83–Ala-103. An NPA 1 motif is present at residues Asn-106 to Ala-108. Helical transmembrane passes span Val-124 to Leu-146, Ser-164 to Thr-184, and Leu-192 to Ser-212. Residues Asn-217–Ala-219 carry the NPA 2 motif. The helical transmembrane segment at Leu-230–Trp-250 threads the bilayer.

The protein belongs to the MIP/aquaporin (TC 1.A.8) family. NIP (TC 1.A.8.12) subfamily.

It localises to the membrane. In terms of biological role, aquaporins facilitate the transport of water and small neutral solutes across cell membranes. The chain is Aquaporin NIP2-1 (NIP2-1) from Zea mays (Maize).